Here is a 351-residue protein sequence, read N- to C-terminus: Photosystem II D2 protein (351 aa).

A helical membrane pass occupies residues 39-59 (CSYLALGAWFTGTTFVTSWYT). Histidine 116 contacts chlorophyll a. The helical transmembrane segment at 123–139 (GFCLRQFEIARLVGLRP) threads the bilayer. The pheophytin a site is built by glutamine 128 and asparagine 141. Residues 151–164 (VFVSVFLLYPLGQA) form a helical membrane-spanning segment. A chlorophyll a-binding site is contributed by histidine 196. Residues 206-226 (GALLCAIHGATVQNTLFEDGE) form a helical membrane-spanning segment. Histidine 213 and phenylalanine 260 together coordinate a plastoquinone. Fe cation is bound at residue histidine 213. Histidine 267 provides a ligand contact to Fe cation. A helical membrane pass occupies residues 277 to 293 (GLWASSIGIVGLALNLR).

It belongs to the reaction center PufL/M/PsbA/D family. As to quaternary structure, PSII is composed of 1 copy each of membrane proteins PsbA, PsbB, PsbC, PsbD, PsbE, PsbF, PsbH, PsbI, PsbJ, PsbK, PsbL, PsbM, PsbT, PsbX, PsbY, PsbZ, Psb30/Ycf12, at least 3 peripheral proteins of the oxygen-evolving complex and a large number of cofactors. It forms dimeric complexes. The cofactor is The D1/D2 heterodimer binds P680, chlorophylls that are the primary electron donor of PSII, and subsequent electron acceptors. It shares a non-heme iron and each subunit binds pheophytin, quinone, additional chlorophylls, carotenoids and lipids. There is also a Cl(-1) ion associated with D1 and D2, which is required for oxygen evolution. The PSII complex binds additional chlorophylls, carotenoids and specific lipids..

Its subcellular location is the plastid. The protein resides in the chloroplast thylakoid membrane. It catalyses the reaction 2 a plastoquinone + 4 hnu + 2 H2O = 2 a plastoquinol + O2. Functionally, photosystem II (PSII) is a light-driven water:plastoquinone oxidoreductase that uses light energy to abstract electrons from H(2)O, generating O(2) and a proton gradient subsequently used for ATP formation. It consists of a core antenna complex that captures photons, and an electron transfer chain that converts photonic excitation into a charge separation. The D1/D2 (PsbA/PsbD) reaction center heterodimer binds P680, the primary electron donor of PSII as well as several subsequent electron acceptors. D2 is needed for assembly of a stable PSII complex. This Cyanidioschyzon merolae (strain NIES-3377 / 10D) (Unicellular red alga) protein is Photosystem II D2 protein.